Here is a 514-residue protein sequence, read N- to C-terminus: 2-isopropylmalate synthase (514 aa).

Residues 8–270 form the Pyruvate carboxyltransferase domain; the sequence is IRIFDTTLRD…DCGVVTEQLF (263 aa). Residues D17, H205, H207, and N241 each contribute to the Mn(2+) site. Residues 394–514 form a regulatory domain region; sequence RLVNLSVQCS…KEEEQEKEGI (121 aa).

It belongs to the alpha-IPM synthase/homocitrate synthase family. LeuA type 1 subfamily. In terms of assembly, homodimer. Requires Mn(2+) as cofactor.

The protein localises to the cytoplasm. It carries out the reaction 3-methyl-2-oxobutanoate + acetyl-CoA + H2O = (2S)-2-isopropylmalate + CoA + H(+). Its pathway is amino-acid biosynthesis; L-leucine biosynthesis; L-leucine from 3-methyl-2-oxobutanoate: step 1/4. Catalyzes the condensation of the acetyl group of acetyl-CoA with 3-methyl-2-oxobutanoate (2-ketoisovalerate) to form 3-carboxy-3-hydroxy-4-methylpentanoate (2-isopropylmalate). This chain is 2-isopropylmalate synthase, found in Nitratidesulfovibrio vulgaris (strain DSM 19637 / Miyazaki F) (Desulfovibrio vulgaris).